Consider the following 49-residue polypeptide: Zinc-containing ferredoxin (49 aa).

The tract at residues 1–36 (GIDPNYRTSRQVVGEHQGHKVYGPVDPPKVLGIHGT) is N-terminal extension. Residues H16 and H19 each coordinate Zn(2+). Residue K29 is modified to N6-methyllysine. H34 contacts Zn(2+). The segment at 37 to 49 (IVXVDFDLCIADG) is ferredoxin. Residue C45 coordinates [3Fe-4S] cluster.

It depends on [3Fe-4S] cluster as a cofactor. [4Fe-4S] cluster serves as cofactor. Zn(2+) is required as a cofactor.

In terms of biological role, ferredoxins are iron-sulfur proteins that transfer electrons in a wide variety of metabolic reactions. This is Zinc-containing ferredoxin (zfx) from Acidianus infernus.